Consider the following 350-residue polypeptide: Protein pelota homolog (350 aa).

The protein belongs to the eukaryotic release factor 1 family. Pelota subfamily. As to quaternary structure, monomer. Requires a divalent metal cation as cofactor.

It is found in the cytoplasm. Functionally, may function in recognizing stalled ribosomes, interact with stem-loop structures in stalled mRNA molecules, and effect endonucleolytic cleavage of the mRNA. May play a role in the release non-functional ribosomes and degradation of damaged mRNAs. Has endoribonuclease activity. The chain is Protein pelota homolog from Methanosarcina barkeri (strain Fusaro / DSM 804).